Here is a 217-residue protein sequence, read N- to C-terminus: Pyridoxine/pyridoxamine 5'-phosphate oxidase (217 aa).

FMN is bound by residues Arg66–Lys71, Phe81–Thr82, Arg87, Lys88, and Gln110. A substrate-binding site is contributed by Lys71. Substrate is bound by residues Tyr128, Arg132, and Ser136. FMN contacts are provided by residues Gln145–Ser146 and Trp190. Arg196–His198 serves as a coordination point for substrate. Residue Arg200 coordinates FMN.

The protein belongs to the pyridoxamine 5'-phosphate oxidase family. Homodimer. The cofactor is FMN.

It catalyses the reaction pyridoxamine 5'-phosphate + O2 + H2O = pyridoxal 5'-phosphate + H2O2 + NH4(+). The enzyme catalyses pyridoxine 5'-phosphate + O2 = pyridoxal 5'-phosphate + H2O2. It functions in the pathway cofactor metabolism; pyridoxal 5'-phosphate salvage; pyridoxal 5'-phosphate from pyridoxamine 5'-phosphate: step 1/1. The protein operates within cofactor metabolism; pyridoxal 5'-phosphate salvage; pyridoxal 5'-phosphate from pyridoxine 5'-phosphate: step 1/1. Its function is as follows. Catalyzes the oxidation of either pyridoxine 5'-phosphate (PNP) or pyridoxamine 5'-phosphate (PMP) into pyridoxal 5'-phosphate (PLP). The chain is Pyridoxine/pyridoxamine 5'-phosphate oxidase from Colwellia psychrerythraea (strain 34H / ATCC BAA-681) (Vibrio psychroerythus).